The primary structure comprises 196 residues: Nodulation protein A (196 aa).

It belongs to the NodA family.

It is found in the cytoplasm. Functionally, N-acyltransferase required for nodulation. Acts in the production of a small, heat-stable compound (Nod) that stimulates mitosis in various plant protoplasts. The polypeptide is Nodulation protein A (Sinorhizobium terangae).